The sequence spans 1102 residues: Carbamoyl phosphate synthase large chain (1102 aa).

The tract at residues 1–402 (MPKRTDLKSV…ALQKALRSLE (402 aa)) is carboxyphosphate synthetic domain. Residues Arg129, Arg169, Gly175, Gly176, Glu208, Ile210, Glu215, Gly241, Val242, His243, Gln285, and Glu299 each contribute to the ATP site. An ATP-grasp 1 domain is found at 133-328 (KGVVERCGAE…IAKIATKLSL (196 aa)). Mg(2+) is bound by residues Gln285, Glu299, and Asn301. Gln285, Glu299, and Asn301 together coordinate Mn(2+). The segment at 403-546 (QKGSQLDFSS…YHYSSYDEED (144 aa)) is oligomerization domain. Positions 547–950 (EVGLHAKPSV…AFAKSQAAAN (404 aa)) are carbamoyl phosphate synthetic domain. An ATP-grasp 2 domain is found at 677-868 (ARVLDEAGLT…MAKAAALIGT (192 aa)). Arg713, Arg752, Leu754, Glu759, Gly784, Ile785, His786, Ser787, Gln827, and Glu839 together coordinate ATP. The Mg(2+) site is built by Gln827, Glu839, and Asn841. Mn(2+) contacts are provided by Gln827, Glu839, and Asn841. The MGS-like domain maps to 951-1096 (NALPTEGKIF…QEHAANLSAA (146 aa)). The tract at residues 951–1102 (NALPTEGKIF…LSAAMEAANA (152 aa)) is allosteric domain.

It belongs to the CarB family. In terms of assembly, composed of two chains; the small (or glutamine) chain promotes the hydrolysis of glutamine to ammonia, which is used by the large (or ammonia) chain to synthesize carbamoyl phosphate. Tetramer of heterodimers (alpha,beta)4. Mg(2+) is required as a cofactor. Mn(2+) serves as cofactor.

The enzyme catalyses hydrogencarbonate + L-glutamine + 2 ATP + H2O = carbamoyl phosphate + L-glutamate + 2 ADP + phosphate + 2 H(+). It catalyses the reaction hydrogencarbonate + NH4(+) + 2 ATP = carbamoyl phosphate + 2 ADP + phosphate + 2 H(+). It functions in the pathway amino-acid biosynthesis; L-arginine biosynthesis; carbamoyl phosphate from bicarbonate: step 1/1. The protein operates within pyrimidine metabolism; UMP biosynthesis via de novo pathway; (S)-dihydroorotate from bicarbonate: step 1/3. Functionally, large subunit of the glutamine-dependent carbamoyl phosphate synthetase (CPSase). CPSase catalyzes the formation of carbamoyl phosphate from the ammonia moiety of glutamine, carbonate, and phosphate donated by ATP, constituting the first step of 2 biosynthetic pathways, one leading to arginine and/or urea and the other to pyrimidine nucleotides. The large subunit (synthetase) binds the substrates ammonia (free or transferred from glutamine from the small subunit), hydrogencarbonate and ATP and carries out an ATP-coupled ligase reaction, activating hydrogencarbonate by forming carboxy phosphate which reacts with ammonia to form carbamoyl phosphate. This is Carbamoyl phosphate synthase large chain from Paenarthrobacter aurescens (strain TC1).